A 493-amino-acid polypeptide reads, in one-letter code: ATP synthase subunit beta, chloroplastic (493 aa).

Residue 170 to 177 (GGAGVGKT) coordinates ATP.

This sequence belongs to the ATPase alpha/beta chains family. In terms of assembly, F-type ATPases have 2 components, CF(1) - the catalytic core - and CF(0) - the membrane proton channel. CF(1) has five subunits: alpha(3), beta(3), gamma(1), delta(1), epsilon(1). CF(0) has four main subunits: a(1), b(1), b'(1) and c(9-12).

The protein localises to the plastid. Its subcellular location is the chloroplast thylakoid membrane. It carries out the reaction ATP + H2O + 4 H(+)(in) = ADP + phosphate + 5 H(+)(out). Functionally, produces ATP from ADP in the presence of a proton gradient across the membrane. The catalytic sites are hosted primarily by the beta subunits. The chain is ATP synthase subunit beta, chloroplastic from Chaetosphaeridium globosum (Charophycean green alga).